Consider the following 155-residue polypeptide: Small ribosomal subunit protein uS7 (155 aa).

This sequence belongs to the universal ribosomal protein uS7 family. In terms of assembly, part of the 30S ribosomal subunit. Contacts proteins S9 and S11.

Its function is as follows. One of the primary rRNA binding proteins, it binds directly to 16S rRNA where it nucleates assembly of the head domain of the 30S subunit. Is located at the subunit interface close to the decoding center, probably blocks exit of the E-site tRNA. The chain is Small ribosomal subunit protein uS7 from Mycoplasma pneumoniae (strain ATCC 29342 / M129 / Subtype 1) (Mycoplasmoides pneumoniae).